The sequence spans 324 residues: Cytochrome c biogenesis protein CcsA (324 aa).

The next 8 membrane-spanning stretches (helical) occupy residues I17–L37, G44–G64, L68–I88, Y99–L119, M145–I165, V230–N250, T264–H278, and A291–L311.

Belongs to the CcmF/CycK/Ccl1/NrfE/CcsA family. As to quaternary structure, may interact with Ccs1.

It localises to the plastid. It is found in the chloroplast thylakoid membrane. Functionally, required during biogenesis of c-type cytochromes (cytochrome c6 and cytochrome f) at the step of heme attachment. In Lemna minor (Common duckweed), this protein is Cytochrome c biogenesis protein CcsA.